A 121-amino-acid polypeptide reads, in one-letter code: Basic phospholipase A2 homolog GodMT-II (121 aa).

7 disulfide bridges follow: Cys26-Cys115, Cys28-Cys44, Cys43-Cys95, Cys49-Cys121, Cys50-Cys88, Cys57-Cys81, and Cys75-Cys86. The segment at 105-117 is important for membrane-damaging activities in eukaryotes and bacteria; heparin-binding; it reads KNYKIYPKPLCKK.

This sequence belongs to the phospholipase A2 family. Group II subfamily. K49 sub-subfamily. As to quaternary structure, monomer. Expressed by the venom gland.

The protein localises to the secreted. Snake venom phospholipase A2 homolog that lacks enzymatic activity but shows high myotoxic activities. In vivo, induces a mild edema when subcutaneously injected into mice foot pad. The sequence is that of Basic phospholipase A2 homolog GodMT-II from Cerrophidion godmani (Porthidium godmani).